Here is a 325-residue protein sequence, read N- to C-terminus: Biotin synthase (325 aa).

Residues 49–267 (TQVQISTLLS…IAAARISMPR (219 aa)) enclose the Radical SAM core domain. [4Fe-4S] cluster is bound by residues Cys64, Cys68, and Cys71. The [2Fe-2S] cluster site is built by Cys108, Cys139, Cys199, and Arg271.

The protein belongs to the radical SAM superfamily. Biotin synthase family. As to quaternary structure, homodimer. Requires [4Fe-4S] cluster as cofactor. The cofactor is [2Fe-2S] cluster.

The catalysed reaction is (4R,5S)-dethiobiotin + (sulfur carrier)-SH + 2 reduced [2Fe-2S]-[ferredoxin] + 2 S-adenosyl-L-methionine = (sulfur carrier)-H + biotin + 2 5'-deoxyadenosine + 2 L-methionine + 2 oxidized [2Fe-2S]-[ferredoxin]. The protein operates within cofactor biosynthesis; biotin biosynthesis; biotin from 7,8-diaminononanoate: step 2/2. In terms of biological role, catalyzes the conversion of dethiobiotin (DTB) to biotin by the insertion of a sulfur atom into dethiobiotin via a radical-based mechanism. This chain is Biotin synthase, found in Acidiphilium cryptum (strain JF-5).